The following is a 296-amino-acid chain: Cobalamin trafficking protein CblD (296 aa).

A mitochondrion-targeting transit peptide spans 1–38 (MANVLCNRARLVSYLPGFCSLVKRVVNPKAFSTAGSSG). An N6-acetyllysine modification is found at K203.

As to quaternary structure, heterodimer with MMACHC. Forms a multiprotein complex with MMACHC, MTR and MTRR. Widely expressed at high levels.

Its subcellular location is the cytoplasm. The protein localises to the mitochondrion. Functionally, involved in cobalamin metabolism and trafficking. Plays a role in regulating the biosynthesis and the proportion of two coenzymes, methylcob(III)alamin (MeCbl) and 5'-deoxyadenosylcobalamin (AdoCbl). Promotes oxidation of cob(II)alamin bound to MMACHC. The processing of cobalamin in the cytosol occurs in a multiprotein complex composed of at least MMACHC, MMADHC, MTRR (methionine synthase reductase) and MTR (methionine synthase) which may contribute to shuttle safely and efficiently cobalamin towards MTR in order to produce methionine. The sequence is that of Cobalamin trafficking protein CblD from Homo sapiens (Human).